The primary structure comprises 638 residues: Probable glycerol-3-phosphate dehydrogenase, mitochondrial (638 aa).

Aspartate 100–glutamate 128 lines the FAD pocket.

Belongs to the FAD-dependent glycerol-3-phosphate dehydrogenase family. FAD is required as a cofactor.

It is found in the mitochondrion. The enzyme catalyses a quinone + sn-glycerol 3-phosphate = dihydroxyacetone phosphate + a quinol. The protein operates within polyol metabolism; glycerol degradation via glycerol kinase pathway; glycerone phosphate from sn-glycerol 3-phosphate (anaerobic route): step 1/1. This Dictyostelium discoideum (Social amoeba) protein is Probable glycerol-3-phosphate dehydrogenase, mitochondrial.